The following is a 456-amino-acid chain: Argininosuccinate lyase (456 aa).

The protein belongs to the lyase 1 family. Argininosuccinate lyase subfamily.

It is found in the cytoplasm. It carries out the reaction 2-(N(omega)-L-arginino)succinate = fumarate + L-arginine. It functions in the pathway amino-acid biosynthesis; L-arginine biosynthesis; L-arginine from L-ornithine and carbamoyl phosphate: step 3/3. The chain is Argininosuccinate lyase from Shewanella woodyi (strain ATCC 51908 / MS32).